The sequence spans 870 residues: Radial spoke head 10 homolog B (870 aa).

Residues 1-16 (MVKEKKKADKKGEKSA) show a composition bias toward basic and acidic residues. Residues 1–43 (MVKEKKKADKKGEKSARSPSSLSDNLDFSKQDGNTTRQEMSPA) are disordered. Over residues 17 to 39 (RSPSSLSDNLDFSKQDGNTTRQE) the composition is skewed to polar residues. 10 MORN repeats span residues 86–108 (YEGEKVRGLYEGEGFAAFQGGCT), 109–131 (YRGMFSEGLMHGQGTYIWADGLK), 132–154 (YEGDFVKNVPMNHGVYTWPDGSM), 155–177 (YEGEVVNGMRNGFGMFKCSTQPV), 179–201 (YIGHWCNGKRHGKGSIYYNQEGT), 204–226 (YEGDWVQNIKKGWGIRCYKSGNI), 227–249 (YEGQWEDNMRHGEGRMRWLTTNE), 251–273 (YTGRWERGIQNGFGTHTWFLKRI), 284–306 (YIGEFVNGYRHGRGKFYYASGAM), and 307–329 (YDGEWVSNKKHGMGRLTFKNGRV). The segment at 674–704 (NKSPSAVMSHESDAAHSDSARSSSSKLELSP) is disordered. The segment covering 683–692 (HESDAAHSDS) has biased composition (basic and acidic residues). A compositionally biased stretch (low complexity) spans 693–703 (ARSSSSKLELS). Positions 784-811 (KEKIRADRLRSTAQAQQRKMEDDELEAR) form a coiled coil. The tract at residues 840 to 870 (VSSSHLILDPPKEDVTVSPSSKTITSKKKKK) is disordered.

As to quaternary structure, interacts with RSPH6A. Does not appear to be part of the axonemal radial spoke complexes 1 or 2.

The protein localises to the cytoplasm. It localises to the cytoskeleton. Its subcellular location is the cilium axoneme. The protein resides in the cell projection. It is found in the cilium. The protein localises to the flagellum. May function as part of the axonemal radial spoke complex 3 (RS3). Radial spoke complexes are important for ciliary motility. This Homo sapiens (Human) protein is Radial spoke head 10 homolog B (RSPH10B).